The sequence spans 286 residues: Bifunctional protein FolD (286 aa).

Residues 166–168 (GAS) and isoleucine 232 contribute to the NADP(+) site.

This sequence belongs to the tetrahydrofolate dehydrogenase/cyclohydrolase family. In terms of assembly, homodimer.

The enzyme catalyses (6R)-5,10-methylene-5,6,7,8-tetrahydrofolate + NADP(+) = (6R)-5,10-methenyltetrahydrofolate + NADPH. It carries out the reaction (6R)-5,10-methenyltetrahydrofolate + H2O = (6R)-10-formyltetrahydrofolate + H(+). It participates in one-carbon metabolism; tetrahydrofolate interconversion. Catalyzes the oxidation of 5,10-methylenetetrahydrofolate to 5,10-methenyltetrahydrofolate and then the hydrolysis of 5,10-methenyltetrahydrofolate to 10-formyltetrahydrofolate. This Marinobacter nauticus (strain ATCC 700491 / DSM 11845 / VT8) (Marinobacter aquaeolei) protein is Bifunctional protein FolD.